Consider the following 212-residue polypeptide: Kynurenine formamidase (212 aa).

Substrate is bound at residue tryptophan 18. Zn(2+) is bound by residues histidine 48, histidine 52, and aspartate 54. Histidine 58 acts as the Proton donor/acceptor in catalysis. Positions 160 and 172 each coordinate Zn(2+).

It belongs to the Cyclase 1 superfamily. KynB family. In terms of assembly, homodimer. Requires Zn(2+) as cofactor.

The enzyme catalyses N-formyl-L-kynurenine + H2O = L-kynurenine + formate + H(+). The protein operates within amino-acid degradation; L-tryptophan degradation via kynurenine pathway; L-kynurenine from L-tryptophan: step 2/2. In terms of biological role, catalyzes the hydrolysis of N-formyl-L-kynurenine to L-kynurenine, the second step in the kynurenine pathway of tryptophan degradation. The polypeptide is Kynurenine formamidase (Paraburkholderia phytofirmans (strain DSM 17436 / LMG 22146 / PsJN) (Burkholderia phytofirmans)).